The primary structure comprises 494 residues: Lysine--tRNA ligase (494 aa).

Mg(2+) contacts are provided by Glu-407 and Glu-414.

This sequence belongs to the class-II aminoacyl-tRNA synthetase family. As to quaternary structure, homodimer. Requires Mg(2+) as cofactor.

The protein localises to the cytoplasm. It catalyses the reaction tRNA(Lys) + L-lysine + ATP = L-lysyl-tRNA(Lys) + AMP + diphosphate. In Lactococcus lactis subsp. cremoris (strain MG1363), this protein is Lysine--tRNA ligase.